A 269-amino-acid polypeptide reads, in one-letter code: Hemin import ATP-binding protein HmuV (269 aa).

The 238-residue stretch at 5 to 242 folds into the ABC transporter domain; the sequence is IETHSVTMRI…GLIRKVFEVC (238 aa). 37–44 is an ATP binding site; sequence GPNGAGKS.

The protein belongs to the ABC transporter superfamily. Heme (hemin) importer (TC 3.A.1.14.5) family. As to quaternary structure, the complex is composed of two ATP-binding proteins (HmuV), two transmembrane proteins (HmuU) and a solute-binding protein (HmuT).

It is found in the cell inner membrane. Its function is as follows. Part of the ABC transporter complex HmuTUV involved in hemin import. Responsible for energy coupling to the transport system. The protein is Hemin import ATP-binding protein HmuV of Nitrobacter winogradskyi (strain ATCC 25391 / DSM 10237 / CIP 104748 / NCIMB 11846 / Nb-255).